The sequence spans 393 residues: uncharacterized protein (393 aa).

The segment at 345-393 (PNKWATDDAARREMERTRKARYRAKNRAVADPEDSPPGKRLRRGPKSST) is disordered. Over residues 349-361 (ATDDAARREMERT) the composition is skewed to basic and acidic residues. Residues 383–393 (KRLRRGPKSST) show a composition bias toward basic residues.

This is an uncharacterized protein from Ictalurid herpesvirus 1 (strain Auburn) (IcHV-1).